Reading from the N-terminus, the 114-residue chain is PDZK1-interacting protein 1 (114 aa).

Residues 1–28 (MSALSLVILGLLMAVPPASCQQGLGNLQ) lie on the Extracellular side of the membrane. A helical membrane pass occupies residues 29 to 51 (PWMQGLIAVAVFLVLVAIAFAIN). Over 52–114 (HFWCQEEREP…EEGRVHSTPM (63 aa)) the chain is Cytoplasmic. Ser85 carries the phosphoserine modification. Positions 92–114 (SNEHENAYENTSEEEGRVHSTPM) are disordered. Basic and acidic residues predominate over residues 105–114 (EEGRVHSTPM).

The protein belongs to the PDZK1-interacting protein 1/SMIM24 family. In terms of assembly, forms a heterodimer (via N-terminal transmembrane helix) with SLC5A2/SGLT2 (via TM13); this interaction enhances SLC5A2 transporter activity. Interacts with PDZK1.

Its subcellular location is the apical cell membrane. Auxiliary protein of electrogenic Na(+)-coupled sugar symporter SLC5A2/SGLT2 and SLC5A1/SGLT1. Essential for the transporter activity of SLC5A2/SGLT2 but not SLC5A1/SGLT1. This chain is PDZK1-interacting protein 1, found in Sus scrofa (Pig).